The primary structure comprises 440 residues: GTPase Der (440 aa).

2 EngA-type G domains span residues 3–167 (PIIA…PYDR) and 176–351 (TRIA…EQYC). Residues 9 to 16 (GRPNVGKS), 56 to 60 (DTGGF), 119 to 122 (NKVD), 182 to 189 (GRPNVGKS), 229 to 233 (DTAGI), and 294 to 297 (NKWD) each bind GTP. Residues 352 to 436 (KRVTTGELNR…PLKLIFRGRD (85 aa)) enclose the KH-like domain.

This sequence belongs to the TRAFAC class TrmE-Era-EngA-EngB-Septin-like GTPase superfamily. EngA (Der) GTPase family. As to quaternary structure, associates with the 50S ribosomal subunit.

Its function is as follows. GTPase that plays an essential role in the late steps of ribosome biogenesis. This is GTPase Der from Citrifermentans bemidjiense (strain ATCC BAA-1014 / DSM 16622 / JCM 12645 / Bem) (Geobacter bemidjiensis).